The chain runs to 287 residues: Neugrin (287 aa).

Residues 1-23 form the signal peptide; that stretch reads MAFSPNVLLGGRVCAAVARSGFA. The disordered stretch occupies residues 149–169; the sequence is SIPELPGPGDSSKPLSAGQSV. Asn202 carries an N-linked (GlcNAc...) asparagine glycan.

The protein belongs to the neugrin family. As to quaternary structure, forms a regulatory protein-RNA complex, consisting of RCC1L, NGRN, RPUSD3, RPUSD4, TRUB2, FASTKD2 and 16S mt-rRNA. Interacts with 16S mt-rRNA; this interaction is direct.

It is found in the nucleus. It localises to the secreted. The protein resides in the mitochondrion membrane. Plays an essential role in mitochondrial ribosome biogenesis. As a component of a functional protein-RNA module, consisting of RCC1L, NGRN, RPUSD3, RPUSD4, TRUB2, FASTKD2 and 16S mitochondrial ribosomal RNA (16S mt-rRNA), controls 16S mt-rRNA abundance and is required for intra-mitochondrial translation of core subunits of the oxidative phosphorylation system. The polypeptide is Neugrin (NGRN) (Bos taurus (Bovine)).